The chain runs to 164 residues: 3-hydroxyacyl-[acyl-carrier-protein] dehydratase FabZ (164 aa).

Histidine 70 is an active-site residue.

The protein belongs to the thioester dehydratase family. FabZ subfamily.

It localises to the cytoplasm. It catalyses the reaction a (3R)-hydroxyacyl-[ACP] = a (2E)-enoyl-[ACP] + H2O. In terms of biological role, involved in unsaturated fatty acids biosynthesis. Catalyzes the dehydration of short chain beta-hydroxyacyl-ACPs and long chain saturated and unsaturated beta-hydroxyacyl-ACPs. This Synechocystis sp. (strain ATCC 27184 / PCC 6803 / Kazusa) protein is 3-hydroxyacyl-[acyl-carrier-protein] dehydratase FabZ.